Here is a 354-residue protein sequence, read N- to C-terminus: Histidinol-phosphate aminotransferase (354 aa).

K215 carries the post-translational modification N6-(pyridoxal phosphate)lysine.

Belongs to the class-II pyridoxal-phosphate-dependent aminotransferase family. Histidinol-phosphate aminotransferase subfamily. Homodimer. Requires pyridoxal 5'-phosphate as cofactor.

It catalyses the reaction L-histidinol phosphate + 2-oxoglutarate = 3-(imidazol-4-yl)-2-oxopropyl phosphate + L-glutamate. It participates in amino-acid biosynthesis; L-histidine biosynthesis; L-histidine from 5-phospho-alpha-D-ribose 1-diphosphate: step 7/9. This is Histidinol-phosphate aminotransferase from Vesicomyosocius okutanii subsp. Calyptogena okutanii (strain HA).